We begin with the raw amino-acid sequence, 638 residues long: Voltage-gated potassium channel KCNC2 (638 aa).

Residues methionine 1–arginine 229 are Cytoplasmic-facing. Residues leucine 47–serine 75 are disordered. Positions proline 56–proline 72 are enriched in pro residues. The Zn(2+) site is built by histidine 124, cysteine 130, cysteine 151, and cysteine 152. Residues phenylalanine 230–leucine 248 traverse the membrane as a helical segment. N-linked (GlcNAc...) asparagine glycans are attached at residues asparagine 259 and asparagine 266. The chain crosses the membrane as a helical span at residues tyrosine 284–phenylalanine 303. The Cytoplasmic segment spans residues serine 304–leucine 314. A helical membrane pass occupies residues leucine 315–serine 337. The helical; Voltage-sensor transmembrane segment at phenylalanine 346–leucine 368 threads the bilayer. The Cytoplasmic portion of the chain corresponds to arginine 369 to glutamate 381. A helical transmembrane segment spans residues phenylalanine 382 to tyrosine 401. 4 residues coordinate K(+): threonine 437, leucine 438, glycine 439, and tyrosine 440. Residues threonine 437–aspartate 442 carry the Selectivity filter motif. A helical transmembrane segment spans residues methionine 451–valine 473. The Cytoplasmic segment spans residues asparagine 474–leucine 638. Positions serine 538–glycine 572 are disordered. Serine 564 is modified (phosphoserine; by PKA). Residue serine 600 is modified to Phosphoserine.

The protein belongs to the potassium channel family. C (Shaw) (TC 1.A.1.2) subfamily. Kv3.2/KCNC2 sub-subfamily. Homotetramer and heterotetramer with other channel-forming alpha subunits, such as KCNC1. Interacts with KCNC1. Homotetramer or heterotetramer channel activity is regulated by association with modulating ancillary subunits such as KCNE1, KCNE2 and KCNE3, creating a functionally diverse range of channel complexes. Interacts with KCNE1, KCNE2 and KCNE3. Post-translationally, phosphorylated by PKA in cortical synaptosomes. cAMP-dependent phosphorylation inhibits channel activity. Histamine H2 receptor- and PKA-induced phosphorylation extends action potential spike duration, reduces action potential spike amplitude, sustains maximum firing frequency in hippocampal interneurons; also reduces the incidence of high-frequency oscillations in hippocampal CA3 pyramidal cell layers. In terms of tissue distribution, expressed in neurons of the visual cortex during postnatal development. Expressed in neurons of the globus pallidus at postnatal age day 7 (P7), onward. Expressed in thalamic relay neurons. Expressed in neurons in layer IV and deeper cortical layers of the neocortex. Expressed in hippocampal interneurons. Expressed in nonpyramidal interneurons in the basolateral amygdala. Expressed in retinal ganglion cells (at protein level). Widely expressed in the brain. Expressed in numerous thalamic relay neurons throughout the dorsal thalamus. Expressed in interneurons of the deep layers V-VI of the cerebral cortex, the CA1 and CA3 pyramidal and dentate gyrus (DG) granule cells of the hippocampus, in neurons of the caudate-putamen, globus pallidus and subthalamic nucleus. Also expressed in the optic layer of interior colliculus, the inferior colliculus, the red nucleus, the medial geniculate, the ventral lateral lemiscus, the reticulotegmental nucleus and in the deep cerebellar nuclei. Expressed in globus pallidus (GP) neurons.

The protein localises to the cell membrane. It is found in the membrane. It localises to the perikaryon. The protein resides in the cell projection. Its subcellular location is the axon. The protein localises to the synapse. It is found in the synaptosome. It localises to the dendrite. The protein resides in the postsynaptic cell membrane. Its subcellular location is the presynaptic cell membrane. The protein localises to the apical cell membrane. It is found in the basolateral cell membrane. It catalyses the reaction K(+)(in) = K(+)(out). With respect to regulation, inhibited by Stichodactyla helianthus peptide ShK. Inhibited by millimolar levels of tetraethylammonium (TEA). Contrary to other channels, inhibited only by millimolar levels of 4-aminopyridine (4-AP). Its function is as follows. Voltage-gated potassium channel that mediates transmembrane potassium transport in excitable membranes, primarily in the brain. Contributes to the regulation of the fast action potential repolarization and in sustained high-frequency firing in neurons of the central nervous system. Homotetramer channels mediate delayed-rectifier voltage-dependent potassium currents that activate rapidly at high-threshold voltages and inactivate slowly. Forms tetrameric channels through which potassium ions pass in accordance with their electrochemical gradient. The channel alternates between opened and closed conformations in response to the voltage difference across the membrane. Can form functional homotetrameric channels and heterotetrameric channels that contain variable proportions of KCNC1, and possibly other family members as well; channel properties depend on the type of alpha subunits that are part of the channel. Channel properties may be modulated either by the association with ancillary subunits, such as KCNE1, KCNE2 and KCNE3 or indirectly by nitric oxide (NO) through a cGMP- and PKG-mediated signaling cascade, slowing channel activation and deactivation of delayed rectifier potassium channels. Contributes to fire sustained trains of very brief action potentials at high frequency in retinal ganglion cells, thalamocortical and suprachiasmatic nucleus (SCN) neurons and in hippocampal and neocortical interneurons. Sustained maximal action potential firing frequency in inhibitory hippocampal interneurons is negatively modulated by histamine H2 receptor activation in a cAMP- and protein kinase (PKA) phosphorylation-dependent manner. Plays a role in maintaining the fidelity of synaptic transmission in neocortical GABAergic interneurons by generating action potential (AP) repolarization at nerve terminals, thus reducing spike-evoked calcium influx and GABA neurotransmitter release. Required for long-range synchronization of gamma oscillations over distance in the neocortex. Contributes to the modulation of the circadian rhythm of spontaneous action potential firing in suprachiasmatic nucleus (SCN) neurons in a light-dependent manner. The chain is Voltage-gated potassium channel KCNC2 from Rattus norvegicus (Rat).